Reading from the N-terminus, the 654-residue chain is Polyvinylalcohol dehydrogenase (654 aa).

An N-terminal signal peptide occupies residues 1–32 (MGSHAWGGAVFSAATLIAFGSVVHASGTVAET). A Cytochrome c domain is found at 42-159 (ADQLDGETLY…AANQWNGWST (118 aa)). Residues C55, C58, and H59 each coordinate heme c.

This sequence belongs to the bacterial PQQ dehydrogenase family. In terms of assembly, monomer. Pyrroloquinoline quinone is required as a cofactor.

The protein resides in the periplasm. The enzyme catalyses a polyvinyl alcohol + 2n Fe(III)-[cytochrome c] = an oxidized polyvinyl alcohol + 2n Fe(II)-[cytochrome c] + 2n H(+). In terms of biological role, catalyzes the oxidation of polyvinyl alcohol (PVA) in the polyvinyl alcohol degradation pathway. The chain is Polyvinylalcohol dehydrogenase (pvadh) from Sphingopyxis sp. (strain 113P3).